The primary structure comprises 158 residues: MSKIPLTIRGAEKLREELHRLKHEDRPRVIQAIAEAREHGDLKENAEYHAAREQQSFIEGRIQEIEGKLSNAQIIDPAAVQAAPKIVFGATVALEDTDTEETVTYQIVGEDEADIKQHLISVNSPIARALIGKEEGDEAVVQAPGGERTYEIVEVRYE.

Positions 53-73 form a coiled coil; that stretch reads EQQSFIEGRIQEIEGKLSNAQ.

The protein belongs to the GreA/GreB family.

In terms of biological role, necessary for efficient RNA polymerase transcription elongation past template-encoded arresting sites. The arresting sites in DNA have the property of trapping a certain fraction of elongating RNA polymerases that pass through, resulting in locked ternary complexes. Cleavage of the nascent transcript by cleavage factors such as GreA or GreB allows the resumption of elongation from the new 3'terminus. GreA releases sequences of 2 to 3 nucleotides. This Halorhodospira halophila (strain DSM 244 / SL1) (Ectothiorhodospira halophila (strain DSM 244 / SL1)) protein is Transcription elongation factor GreA.